We begin with the raw amino-acid sequence, 72 residues long: MAKEDVIEIEGKVVETMPNAMFTVELENGHQILATVSGKIRKNYIRILVGDKVTVEMSPYDLTRGRITYRFK.

Residues 1 to 72 (MAKEDVIEIE…TRGRITYRFK (72 aa)) form the S1-like domain.

The protein belongs to the IF-1 family. In terms of assembly, component of the 30S ribosomal translation pre-initiation complex which assembles on the 30S ribosome in the order IF-2 and IF-3, IF-1 and N-formylmethionyl-tRNA(fMet); mRNA recruitment can occur at any time during PIC assembly.

Its subcellular location is the cytoplasm. Its function is as follows. One of the essential components for the initiation of protein synthesis. Stabilizes the binding of IF-2 and IF-3 on the 30S subunit to which N-formylmethionyl-tRNA(fMet) subsequently binds. Helps modulate mRNA selection, yielding the 30S pre-initiation complex (PIC). Upon addition of the 50S ribosomal subunit IF-1, IF-2 and IF-3 are released leaving the mature 70S translation initiation complex. The chain is Translation initiation factor IF-1 from Streptococcus mutans serotype c (strain ATCC 700610 / UA159).